The chain runs to 374 residues: Type II methyltransferase M.BbvI (374 aa).

One can recognise an SAM-dependent MTase C5-type domain in the interval 3–347 (FRKGELFCGP…EAVLKTFARI (345 aa)). Cys-92 is a catalytic residue.

This sequence belongs to the class I-like SAM-binding methyltransferase superfamily. C5-methyltransferase family.

The enzyme catalyses a 2'-deoxycytidine in DNA + S-adenosyl-L-methionine = a 5-methyl-2'-deoxycytidine in DNA + S-adenosyl-L-homocysteine + H(+). Functionally, a methylase, recognizes the double-stranded sequence 5'-GCAGC-3', methylates C-2 on both strands, and protects the DNA from cleavage by the BbvI endonuclease. The protein is Type II methyltransferase M.BbvI (bbvIM) of Brevibacillus brevis (Bacillus brevis).